The sequence spans 712 residues: Glycine--tRNA ligase beta subunit (712 aa).

The protein belongs to the class-II aminoacyl-tRNA synthetase family. Tetramer of two alpha and two beta subunits.

Its subcellular location is the cytoplasm. It carries out the reaction tRNA(Gly) + glycine + ATP = glycyl-tRNA(Gly) + AMP + diphosphate. This is Glycine--tRNA ligase beta subunit from Dechloromonas aromatica (strain RCB).